We begin with the raw amino-acid sequence, 283 residues long: 1-deoxypentalenic acid 11-beta-hydroxylase (283 aa).

R117 provides a ligand contact to substrate. Residues H135 and D137 each contribute to the Fe cation site. 2-oxoglutarate contacts are provided by residues 135-137 (HQD) and W151. R186 provides a ligand contact to substrate. Fe cation is bound at residue H224. 2-oxoglutarate is bound by residues S226 and R238. The tract at residues 260–283 (WPESAKDASKGILSKITGTPTTAE) is disordered.

Belongs to the PhyH family. It depends on Fe cation as a cofactor. L-ascorbate is required as a cofactor.

It catalyses the reaction 1-deoxypentalenate + 2-oxoglutarate + O2 = 1-deoxy-11beta-hydroxypentalenate + succinate + CO2. The protein operates within antibiotic biosynthesis; pentalenolactone biosynthesis. Its function is as follows. Catalyzes the conversion of 1-deoxypentalenic acid to 11-beta-hydroxy-1-deoxypentalenic acid in the biosynthesis of pentalenolactone antibiotic. The protein is 1-deoxypentalenic acid 11-beta-hydroxylase (penH) of Streptomyces exfoliatus (Streptomyces hydrogenans).